The chain runs to 448 residues: Signal recognition particle protein (448 aa).

GTP is bound by residues 101 to 108 (GLQGSGKT), 182 to 186 (DSAGR), and 240 to 243 (SKFD).

Belongs to the GTP-binding SRP family. SRP54 subfamily. As to quaternary structure, part of the signal recognition particle protein translocation system, which is composed of SRP and FtsY. SRP is a ribonucleoprotein composed of Ffh and a 4.5S RNA molecule.

The protein resides in the cytoplasm. The catalysed reaction is GTP + H2O = GDP + phosphate + H(+). Functionally, involved in targeting and insertion of nascent membrane proteins into the cytoplasmic membrane. Binds to the hydrophobic signal sequence of the ribosome-nascent chain (RNC) as it emerges from the ribosomes. The SRP-RNC complex is then targeted to the cytoplasmic membrane where it interacts with the SRP receptor FtsY. Interaction with FtsY leads to the transfer of the RNC complex to the Sec translocase for insertion into the membrane, the hydrolysis of GTP by both Ffh and FtsY, and the dissociation of the SRP-FtsY complex into the individual components. The protein is Signal recognition particle protein of Helicobacter pylori (strain J99 / ATCC 700824) (Campylobacter pylori J99).